The following is a 481-amino-acid chain: UDP-glucose 6-dehydrogenase 1 (481 aa).

NAD(+) is bound by residues 8–13 (GAGYVG), Asp-33, Arg-38, 86–90 (VNTPT), 127–128 (ST), and Glu-161. Substrate-binding positions include 157–161 (EFLAE), 216–223 (KLAANAFL), and 256–269 (RIGP…VGFG). Cys-272 functions as the Nucleophile in the catalytic mechanism. 272-275 (CFQK) contributes to the NAD(+) binding site. Position 334-335 (334-335 (FK)) interacts with substrate. Arg-342 contacts NAD(+). Position 448 (Arg-448) interacts with substrate.

The protein belongs to the UDP-glucose/GDP-mannose dehydrogenase family.

It catalyses the reaction UDP-alpha-D-glucose + 2 NAD(+) + H2O = UDP-alpha-D-glucuronate + 2 NADH + 3 H(+). It functions in the pathway nucleotide-sugar biosynthesis; UDP-alpha-D-glucuronate biosynthesis; UDP-alpha-D-glucuronate from UDP-alpha-D-glucose: step 1/1. Its activity is regulated as follows. Inhibited by UDP-xylose. Its function is as follows. Involved in the biosynthesis of UDP-glucuronic acid (UDP-GlcA), providing nucleotide sugars for cell-wall polymers. This chain is UDP-glucose 6-dehydrogenase 1 (UGD1), found in Arabidopsis thaliana (Mouse-ear cress).